The primary structure comprises 224 residues: MGKENSKVVVLDFWASPYAMRTKVALREKGVEFEVQEEDLWNKSELLLKSNPVHKKVPVLIHNNTPISESLIQVQYIDETWTDAASFLPSDPQSRATARFWADYADKTISFEGGRKIWGNKKGEEQEKGKKEFLESLKVLEAELGDKSYFGGETFGYVDITLVPFYSWFYALEKCGDFSVEAECPKIVAWGKRCVERNSVAATLPESEKVYQQVLKLRQIFGVE.

Residues 6–85 (SKVVVLDFWA…YIDETWTDAA (80 aa)) enclose the GST N-terminal domain. Glutathione contacts are provided by residues 16–17 (SP), 42–43 (NK), 56–57 (KV), and 69–70 (ES). One can recognise a GST C-terminal domain in the interval 91–217 (DPQSRATARF…EKVYQQVLKL (127 aa)). Thr154 is subject to Phosphothreonine.

It belongs to the GST superfamily. Tau family.

The protein resides in the cytoplasm. It is found in the cytosol. It catalyses the reaction RX + glutathione = an S-substituted glutathione + a halide anion + H(+). May be involved in the conjugation of reduced glutathione to a wide number of exogenous and endogenous hydrophobic electrophiles and have a detoxification role against certain herbicides. The sequence is that of Glutathione S-transferase U28 (GSTU28) from Arabidopsis thaliana (Mouse-ear cress).